The following is a 716-amino-acid chain: Polyribonucleotide nucleotidyltransferase (716 aa).

Residues aspartate 488 and aspartate 494 each coordinate Mg(2+). The KH domain maps to 555–614; it reads PKIETITIPTDKIREVIGTGGKVIREIVATTGAKVDINDEGTVKVSASDGAKIKAAIDWI. In terms of domain architecture, S1 motif spans 624-692; the sequence is GAIYDGKVVK…DRGKTKLSMK (69 aa). The tract at residues 695–716 is disordered; it reads DQETGEDLSKKEAVSPEEAVNT.

This sequence belongs to the polyribonucleotide nucleotidyltransferase family. The cofactor is Mg(2+).

The protein localises to the cytoplasm. The catalysed reaction is RNA(n+1) + phosphate = RNA(n) + a ribonucleoside 5'-diphosphate. In terms of biological role, involved in mRNA degradation. Catalyzes the phosphorolysis of single-stranded polyribonucleotides processively in the 3'- to 5'-direction. The polypeptide is Polyribonucleotide nucleotidyltransferase (Caulobacter sp. (strain K31)).